A 356-amino-acid chain; its full sequence is Holliday junction branch migration complex subunit RuvB (356 aa).

The tract at residues 4–190 (TDKLAAERII…FGIVARLEFY (187 aa)) is large ATPase domain (RuvB-L). ATP-binding positions include Leu29, Arg30, Gly71, Lys74, Thr75, Thr76, 137–139 (EDY), Arg180, Tyr190, and Arg227. Thr75 contacts Mg(2+). A small ATPAse domain (RuvB-S) region spans residues 191 to 261 (DAEQLSRIVR…VADAALAMLD (71 aa)). Residues 264–356 (PVGFDLMDRK…NLWDTPDAEC (93 aa)) are head domain (RuvB-H). Arg300, Arg319, and Arg324 together coordinate DNA.

Belongs to the RuvB family. In terms of assembly, homohexamer. Forms an RuvA(8)-RuvB(12)-Holliday junction (HJ) complex. HJ DNA is sandwiched between 2 RuvA tetramers; dsDNA enters through RuvA and exits via RuvB. An RuvB hexamer assembles on each DNA strand where it exits the tetramer. Each RuvB hexamer is contacted by two RuvA subunits (via domain III) on 2 adjacent RuvB subunits; this complex drives branch migration. In the full resolvosome a probable DNA-RuvA(4)-RuvB(12)-RuvC(2) complex forms which resolves the HJ.

It localises to the cytoplasm. The catalysed reaction is ATP + H2O = ADP + phosphate + H(+). Functionally, the RuvA-RuvB-RuvC complex processes Holliday junction (HJ) DNA during genetic recombination and DNA repair, while the RuvA-RuvB complex plays an important role in the rescue of blocked DNA replication forks via replication fork reversal (RFR). RuvA specifically binds to HJ cruciform DNA, conferring on it an open structure. The RuvB hexamer acts as an ATP-dependent pump, pulling dsDNA into and through the RuvAB complex. RuvB forms 2 homohexamers on either side of HJ DNA bound by 1 or 2 RuvA tetramers; 4 subunits per hexamer contact DNA at a time. Coordinated motions by a converter formed by DNA-disengaged RuvB subunits stimulates ATP hydrolysis and nucleotide exchange. Immobilization of the converter enables RuvB to convert the ATP-contained energy into a lever motion, pulling 2 nucleotides of DNA out of the RuvA tetramer per ATP hydrolyzed, thus driving DNA branch migration. The RuvB motors rotate together with the DNA substrate, which together with the progressing nucleotide cycle form the mechanistic basis for DNA recombination by continuous HJ branch migration. Branch migration allows RuvC to scan DNA until it finds its consensus sequence, where it cleaves and resolves cruciform DNA. The chain is Holliday junction branch migration complex subunit RuvB from Burkholderia pseudomallei (strain 668).